The following is a 371-amino-acid chain: 4-hydroxybutyrate dehydrogenase (371 aa).

NAD(+) is bound by residues Gly-88–Asp-92, Thr-126–Thr-130, and Lys-148. Fe cation is bound by residues Asp-182, His-186, His-253, and His-267. His-267 contributes to the NAD(+) binding site.

It belongs to the iron-containing alcohol dehydrogenase family. Homodimer. The cofactor is Fe(2+). It depends on Cu(2+) as a cofactor.

It carries out the reaction 4-hydroxybutanoate + NAD(+) = succinate semialdehyde + NADH + H(+). Its activity is regulated as follows. Inactivated by oxygen. Its function is as follows. Involved in the anaerobic succinate degradation pathway. Catalyzes the interconversion of gamma-hydroxybutyrate (GHB) and succinic semialdehyde (SSA). The sequence is that of 4-hydroxybutyrate dehydrogenase from Clostridium kluyveri (strain ATCC 8527 / DSM 555 / NBRC 12016 / NCIMB 10680 / K1).